The primary structure comprises 428 residues: Serine--tRNA ligase (428 aa).

231-233 (TSE) is a binding site for L-serine. Residues 262–264 (RRE) and valine 278 contribute to the ATP site. Glutamate 285 serves as a coordination point for L-serine. 349–352 (ELTS) provides a ligand contact to ATP. Threonine 384 is a binding site for L-serine.

It belongs to the class-II aminoacyl-tRNA synthetase family. Type-1 seryl-tRNA synthetase subfamily. As to quaternary structure, homodimer. The tRNA molecule binds across the dimer.

It localises to the cytoplasm. The enzyme catalyses tRNA(Ser) + L-serine + ATP = L-seryl-tRNA(Ser) + AMP + diphosphate + H(+). It carries out the reaction tRNA(Sec) + L-serine + ATP = L-seryl-tRNA(Sec) + AMP + diphosphate + H(+). The protein operates within aminoacyl-tRNA biosynthesis; selenocysteinyl-tRNA(Sec) biosynthesis; L-seryl-tRNA(Sec) from L-serine and tRNA(Sec): step 1/1. Catalyzes the attachment of serine to tRNA(Ser). Is also able to aminoacylate tRNA(Sec) with serine, to form the misacylated tRNA L-seryl-tRNA(Sec), which will be further converted into selenocysteinyl-tRNA(Sec). This Bifidobacterium longum (strain NCC 2705) protein is Serine--tRNA ligase.